The following is a 226-amino-acid chain: Lipoprotein-releasing system ATP-binding protein LolD (226 aa).

The region spanning 5–225 is the ABC transporter domain; sequence FALSNISKFF…EINSCMLSSV (221 aa). 40–47 provides a ligand contact to ATP; it reads GRSGSGKS.

This sequence belongs to the ABC transporter superfamily. Lipoprotein translocase (TC 3.A.1.125) family. As to quaternary structure, the complex is composed of two ATP-binding proteins (LolD) and two transmembrane proteins (LolC and LolE).

The protein resides in the cell inner membrane. In terms of biological role, part of the ABC transporter complex LolCDE involved in the translocation of mature outer membrane-directed lipoproteins, from the inner membrane to the periplasmic chaperone, LolA. Responsible for the formation of the LolA-lipoprotein complex in an ATP-dependent manner. In Ehrlichia canis (strain Jake), this protein is Lipoprotein-releasing system ATP-binding protein LolD.